The sequence spans 117 residues: Circadian clock oscillator protein KaiB (117 aa).

The protein belongs to the KaiB family. In terms of assembly, may undergo a major conformational rearrangment; in the free state forms homooligomers. When bound to KaiC switches to a monomeric thioredoxin-fold (KaiB(fs)). The active oscillator complex is probably KaiC(6):KaiB(6).

Its function is as follows. Component of the KaiBC clock protein complex, which constitutes the main circadian regulator in cyanobacteria; it may modify the ATPase activity of KaiC. In terms of biological role, may be a metamorphic protein which reversibly switches between an inactive tetrameric fold and a rare, thioredoxin-like monomeric fold (KaiB(fs)). KaiB(fs) binds phospho-KaiC, and perhaps clock output effectors. The chain is Circadian clock oscillator protein KaiB from Prochlorococcus marinus (strain SARG / CCMP1375 / SS120).